We begin with the raw amino-acid sequence, 253 residues long: Triosephosphate isomerase (253 aa).

A substrate-binding site is contributed by 8 to 10 (NWK). Histidine 91 functions as the Electrophile in the catalytic mechanism. The Proton acceptor role is filled by glutamate 168. Substrate-binding positions include glycine 174, serine 213, and 234 to 235 (GG).

Belongs to the triosephosphate isomerase family. Homodimer.

It localises to the cytoplasm. The enzyme catalyses D-glyceraldehyde 3-phosphate = dihydroxyacetone phosphate. The protein operates within carbohydrate biosynthesis; gluconeogenesis. It functions in the pathway carbohydrate degradation; glycolysis; D-glyceraldehyde 3-phosphate from glycerone phosphate: step 1/1. Involved in the gluconeogenesis. Catalyzes stereospecifically the conversion of dihydroxyacetone phosphate (DHAP) to D-glyceraldehyde-3-phosphate (G3P). The sequence is that of Triosephosphate isomerase from Acidiphilium cryptum (strain JF-5).